Reading from the N-terminus, the 137-residue chain is Large ribosomal subunit protein uL16 (137 aa).

This sequence belongs to the universal ribosomal protein uL16 family. As to quaternary structure, part of the 50S ribosomal subunit.

In terms of biological role, binds 23S rRNA and is also seen to make contacts with the A and possibly P site tRNAs. The protein is Large ribosomal subunit protein uL16 of Spiroplasma citri.